Consider the following 1730-residue polypeptide: SH3 and multiple ankyrin repeat domains protein 3 (1730 aa).

Positions 1–75 (MDGPGASAVV…KFLDEERLLQ (75 aa)) are intramolecular interaction with the ANK repeats. Tyrosine 122 is subject to Phosphotyrosine. 6 ANK repeats span residues 148–178 (SGECPLSLAAQLDNATDLLKVLRNGGAHLDF), 182–211 (DGLTAVHCATRQRNAGALTTLLDLGASPDY), 215–245 (RGLTPLYHSALGGGDALCCELLLHDHAQLGT), 249–278 (NGWQEIHQACRFGHVQHLEHLLFYGANMGA), 282–311 (SGNTALHICALYNQESCARVLLFRGANKDV), and 315–345 (NSQTAFQVAIIAGNFELAEVIKTHKDSDVVP). The tract at residues 354–466 (KRRRLAGPSG…PPPRGPKRKL (113 aa)) is disordered. Phosphoserine is present on residues serine 373, serine 375, serine 387, and serine 394. A compositionally biased stretch (basic and acidic residues) spans 404–415 (LQEEKDRDRDGE). The segment covering 444-460 (APGPGPASPAPPAPPPR) has biased composition (pro residues). The SH3 domain maps to 470–529 (VPGRKFIAVKAHSPQGEGEIPLHRGEAVKVLSIGEGGFWEGTVKGRTGWFPADCVEEVQM). Residue serine 482 is modified to Phosphoserine. Tyrosine 555 carries the phosphotyrosine modification. Residues 570-664 (VAILQKRDHE…RLVMKVVSVT (95 aa)) form the PDZ domain. Residues 664-688 (TRKPEEDGARRRAPPPPKRAPSTTL) are disordered. The segment at 677–684 (PPPPKRAP) is required for interaction with ABI1. Phosphoserine is present on residues serine 694, serine 781, serine 790, and serine 801. Disordered stretches follow at residues 760–1460 (QGLP…AAGP) and 1475–1524 (GDPV…SLLD). Pro residues predominate over residues 812–844 (IPPPPQTAPPPPPAPYYFDSGPPPTFSPPPPPG). Low complexity predominate over residues 857–869 (GLEARLGAGAAGL). A phosphoserine mark is found at serine 890 and serine 897. Threonine 912 is subject to Phosphothreonine. The residue at position 930 (tyrosine 930) is a Phosphotyrosine. Asymmetric dimethylarginine is present on arginine 965. Residue serine 995 is modified to Phosphoserine. The segment covering 1016–1026 (VKERRLEERRR) has biased composition (basic and acidic residues). Residues 1078–1092 (LKPLVGGPSLGPSGS) show a composition bias toward low complexity. Positions 1122–1131 (SQTPSRSPTP) are enriched in polar residues. Threonine 1130 is subject to Phosphothreonine. 4 positions are modified to phosphoserine: serine 1134, serine 1159, serine 1163, and serine 1166. The segment covering 1174–1194 (ARREAEKPPREERKSPEDKKS) has biased composition (basic and acidic residues). Residue threonine 1234 is modified to Phosphothreonine. Residues 1235–1250 (PELAPAPMQAAAVAEP) show a composition bias toward low complexity. 2 stretches are compositionally biased toward pro residues: residues 1251 to 1261 (MPSPRAQPPGS) and 1321 to 1333 (TPPPGPGPLPTTV). Phosphoserine is present on serine 1253. The span at 1360 to 1370 (ADTRSSSDPHL) shows a compositional bias: basic and acidic residues. Residues 1371–1392 (ETTSTISTVSSMSTLSSESGEL) are compositionally biased toward low complexity. The SH3-binding signature appears at 1410-1416 (PPVPPKP). Serine 1420 is modified (phosphoserine). A coiled-coil region spans residues 1494-1514 (ISELSSRLQQLNKDTRSLGEE). Polar residues predominate over residues 1495–1505 (SELSSRLQQLN). A phosphoserine mark is found at serine 1510, serine 1521, serine 1529, and serine 1539. 2 disordered regions span residues 1546-1584 (ISAQRSPGGPGGGASYSVRPSGRYPVARRAPSPVKPASL) and 1627-1663 (VRSVSARSRSPSPSPLPSPSPGSGPSAGPRRPFQQKP). Positions 1627–1637 (VRSVSARSRSP) are enriched in low complexity. Residues serine 1634, serine 1636, and serine 1638 each carry the phosphoserine modification. The segment covering 1638-1648 (SPSPLPSPSPG) has biased composition (pro residues). A compositionally biased stretch (low complexity) spans 1649–1658 (SGPSAGPRRP). One can recognise an SAM domain in the interval 1667 to 1730 (WSKFDVGDWL…ERALRQLDGS (64 aa)).

The protein belongs to the SHANK family. As to quaternary structure, may homomultimerize via its SAM domain. Interacts with BAIAP2, DBNL and SLC17A7/VGLUT1. Interacts with DLGAP1/GKAP, GRM1/MGLUR1, GRM5/MGLUR5 and LZTS3 C-termini via its PDZ domain. Interacts with ABI1, HOMER1, HOMER2, HOMER3 and CTTN/cortactin SH3 domain. Is part of a complex with DLG4/PSD-95 and DLGAP1/GKAP. Interacts (via PDZ domain) with the GRIA1 subunit of the AMPA receptor (via PDZ-binding motif). Interacts with WASF1 and CYFIP2; the interactions mediate the association of SHANK3 with the WAVE1 complex. Interacts with ARPC2; the interaction probably mediates the association of SHANK3 with the Arp2/3 complex. Interacts (via ANK repeats) with SHARPIN and SPTAN1. Interacts (via PDZ domain) with ARHGAP44 (probably via PDZ-binding motif); the interaction takes place in dendritic spines and promotes GRIA1 exocytosis. Interacts with CAMK2A. Interacts with DIP2A. Interacts with ADGRL3. In terms of tissue distribution, in brain, highly expressed in striatum, thalamus, hippocampus and granule cells of the cerebellum.

The protein localises to the cytoplasm. Its subcellular location is the synapse. It localises to the postsynaptic density. The protein resides in the cell projection. It is found in the dendritic spine. In terms of biological role, major scaffold postsynaptic density protein which interacts with multiple proteins and complexes to orchestrate the dendritic spine and synapse formation, maturation and maintenance. Interconnects receptors of the postsynaptic membrane including NMDA-type and metabotropic glutamate receptors via complexes with GKAP/PSD-95 and HOMER, respectively, and the actin-based cytoskeleton. Plays a role in the structural and functional organization of the dendritic spine and synaptic junction through the interaction with Arp2/3 and WAVE1 complex as well as the promotion of the F-actin clusters. By way of this control of actin dynamics, participates in the regulation of developing neurons growth cone motility and the NMDA receptor-signaling. Also modulates GRIA1 exocytosis and GRM5/MGLUR5 expression and signaling to control the AMPA and metabotropic glutamate receptor-mediated synaptic transmission and plasticity. May be required at an early stage of synapse formation and be inhibited by IGF1 to promote synapse maturation. This Mus musculus (Mouse) protein is SH3 and multiple ankyrin repeat domains protein 3 (Shank3).